A 313-amino-acid chain; its full sequence is Homoserine kinase (313 aa).

Proline 92–alanine 102 contributes to the ATP binding site.

It belongs to the GHMP kinase family. Homoserine kinase subfamily.

The protein localises to the cytoplasm. It catalyses the reaction L-homoserine + ATP = O-phospho-L-homoserine + ADP + H(+). Its pathway is amino-acid biosynthesis; L-threonine biosynthesis; L-threonine from L-aspartate: step 4/5. Functionally, catalyzes the ATP-dependent phosphorylation of L-homoserine to L-homoserine phosphate. This chain is Homoserine kinase, found in Aeropyrum pernix (strain ATCC 700893 / DSM 11879 / JCM 9820 / NBRC 100138 / K1).